We begin with the raw amino-acid sequence, 450 residues long: Akuammiline synthase 2 (450 aa).

His154 serves as the catalytic Proton acceptor. The Nuclear localization signal signature appears at 218-225; the sequence is MRRFVFDA. Asp376 acts as the Proton acceptor in catalysis.

The protein belongs to the plant acyltransferase family. In terms of assembly, monomer.

The protein localises to the cytoplasm. The protein resides in the nucleus. The catalysed reaction is rhazimol + acetyl-CoA = akuammiline + CoA + H(+). Its pathway is alkaloid biosynthesis. In terms of biological role, acyltransferase involved in the biosynthesis of akuammilan monoterpene indole alkaloids (MIAs) natural products, components with various biological properties such as antidiabetic, antibacterial, anti-inflammatory, anticancer, and antimalarial activities. Catalyzes the conversion of rhazimol to akuammiline. In Alstonia scholaris (Dogbane), this protein is Akuammiline synthase 2.